Here is a 709-residue protein sequence, read N- to C-terminus: Polyribonucleotide nucleotidyltransferase (709 aa).

Positions 487 and 493 each coordinate Mg(2+). Residues 554-613 enclose the KH domain; it reads PRIHTMKISSDKIKDVIGKGGAVIRALCEETGTTIEIEDDGTIKIAATEGAAAKEAIRRI. Residues 623–691 enclose the S1 motif domain; that stretch reads GKIYPGKVMR…RQGRIRLSIK (69 aa).

This sequence belongs to the polyribonucleotide nucleotidyltransferase family. Component of the RNA degradosome, which is a multiprotein complex involved in RNA processing and mRNA degradation. The cofactor is Mg(2+).

The protein localises to the cytoplasm. The catalysed reaction is RNA(n+1) + phosphate = RNA(n) + a ribonucleoside 5'-diphosphate. In terms of biological role, involved in mRNA degradation. Catalyzes the phosphorolysis of single-stranded polyribonucleotides processively in the 3'- to 5'-direction. The polypeptide is Polyribonucleotide nucleotidyltransferase (Aliivibrio salmonicida (strain LFI1238) (Vibrio salmonicida (strain LFI1238))).